The following is a 400-amino-acid chain: NADH-ubiquinone oxidoreductase 49 kDa subunit (400 aa).

Belongs to the complex I 49 kDa subunit family.

It is found in the mitochondrion. It catalyses the reaction a ubiquinone + NADH + 5 H(+)(in) = a ubiquinol + NAD(+) + 4 H(+)(out). In terms of biological role, core subunit of the mitochondrial membrane respiratory chain NADH dehydrogenase (Complex I) that is believed to belong to the minimal assembly required for catalysis. Complex I functions in the transfer of electrons from NADH to the respiratory chain. The immediate electron acceptor for the enzyme is believed to be ubiquinone. Component of the iron-sulfur (IP) fragment of the enzyme. Component of the iron-sulfur (IP) fragment of the enzyme. The protein is NADH-ubiquinone oxidoreductase 49 kDa subunit (NAD7) of Prototheca wickerhamii.